The sequence spans 540 residues: tRNA-2-methylthio-N(6)-dimethylallyladenosine synthase (540 aa).

The 117-residue stretch at 41–157 folds into the MTTase N-terminal domain; sequence RTYEVRTFGC…LPTLLERSAH (117 aa). [4Fe-4S] cluster contacts are provided by cysteine 50, cysteine 86, cysteine 120, cysteine 194, cysteine 198, and cysteine 201. A Radical SAM core domain is found at 180-416; that stretch reads RESAYSGWVS…IALQERIQAE (237 aa). The TRAM domain maps to 419-486; it reads KELVGTTQEL…PFFLIADGPL (68 aa).

It belongs to the methylthiotransferase family. MiaB subfamily. In terms of assembly, monomer. [4Fe-4S] cluster serves as cofactor.

Its subcellular location is the cytoplasm. It carries out the reaction N(6)-dimethylallyladenosine(37) in tRNA + (sulfur carrier)-SH + AH2 + 2 S-adenosyl-L-methionine = 2-methylsulfanyl-N(6)-dimethylallyladenosine(37) in tRNA + (sulfur carrier)-H + 5'-deoxyadenosine + L-methionine + A + S-adenosyl-L-homocysteine + 2 H(+). Functionally, catalyzes the methylthiolation of N6-(dimethylallyl)adenosine (i(6)A), leading to the formation of 2-methylthio-N6-(dimethylallyl)adenosine (ms(2)i(6)A) at position 37 in tRNAs that read codons beginning with uridine. In Corynebacterium urealyticum (strain ATCC 43042 / DSM 7109), this protein is tRNA-2-methylthio-N(6)-dimethylallyladenosine synthase.